The sequence spans 329 residues: UDP-N-acetylenolpyruvoylglucosamine reductase (329 aa).

The FAD-binding PCMH-type domain occupies 28 to 192 (RVGGPADLLC…ARVEVRLHAG (165 aa)). R172 is an active-site residue. A disordered region spans residues 202–227 (REDRERRRATQPLDRPTFGSTFTNPP). S221 (proton donor) is an active-site residue. E291 is an active-site residue. The interval 307–329 (DGHAAAGGGPGAASGGVRPPEAT) is disordered. Gly residues predominate over residues 311 to 320 (AAGGGPGAAS).

The protein belongs to the MurB family. FAD serves as cofactor.

The protein resides in the cytoplasm. The catalysed reaction is UDP-N-acetyl-alpha-D-muramate + NADP(+) = UDP-N-acetyl-3-O-(1-carboxyvinyl)-alpha-D-glucosamine + NADPH + H(+). It participates in cell wall biogenesis; peptidoglycan biosynthesis. Functionally, cell wall formation. In Anaeromyxobacter sp. (strain K), this protein is UDP-N-acetylenolpyruvoylglucosamine reductase.